We begin with the raw amino-acid sequence, 328 residues long: Ubiquitin carboxyl-terminal hydrolase isozyme L5 (328 aa).

In terms of domain architecture, UCH catalytic spans 7-225 (EWCLMESDPG…IRFNLMAIVS (219 aa)). At Lys47 the chain carries N6-succinyllysine. Residue Cys88 is the Nucleophile of the active site. Position 158 is an N6-acetyllysine (Lys158). The active-site Proton donor is His164. The residue at position 288 (Lys288) is an N6-succinyllysine. Residues 290–318 (NYLPFIMELLKTLAEHQQLIPLVEKAKEK) enclose the ULD domain. The interval 312–328 (VEKAKEKQNAKKAQETK) is interaction with ADRM1.

Belongs to the peptidase C12 family. Component of the 19S (PA700) regulatory complex of the 26S proteasome. Interacts with ADRM1 and NFRKB. Component of the INO80 complex; specifically part of a complex module associated with N-terminus of INO80.

It is found in the cytoplasm. Its subcellular location is the nucleus. The catalysed reaction is Thiol-dependent hydrolysis of ester, thioester, amide, peptide and isopeptide bonds formed by the C-terminal Gly of ubiquitin (a 76-residue protein attached to proteins as an intracellular targeting signal).. Its activity is regulated as follows. Activated by ADRM1. Inhibited by interaction with NFRKB. Protease that specifically cleaves 'Lys-48'-linked polyubiquitin chains. Deubiquitinating enzyme associated with the 19S regulatory subunit of the 26S proteasome. Putative regulatory component of the INO80 complex; however is inactive in the INO80 complex and is activated by a transient interaction of the INO80 complex with the proteasome via ADRM1. This chain is Ubiquitin carboxyl-terminal hydrolase isozyme L5 (UCHL5), found in Bos taurus (Bovine).